The following is a 436-amino-acid chain: MEMLRRNFFRLLMVLVAGCGLIASPAKALVEIDINKGNVEPLPIAITDFVQGELAQKISDVIAADLKRSGLFAPINKGAFIEKVSNPDATPRFEDWKVINAQALVIGRVTKEGDGRLKAEFRLWDTFAGTQMLGQQFYTQPENWRRVAHIIADAIYERITGEKGYFDTRIVYVAESGPKNARQRQLAIMDQDGANSRALTNSNDIVLTPRFSPNRQEITYMSFENQQPRVYLLQLETGQREVVGNFPGMTFAPRFSPDGQRVIMSLQQEGNANIYTMDLRSRTTTRLTNTAAIDTSPSYSPDGSRVVFESDRGGRQQLYVMGADGSGQTRISFGDGSYSTPVWSPRGDLIAFTKQSGGKFSIGVMKPDGSGERILTTGFHNEGPTWAPNGRVLMFFRQNAGAGGPQLYSIDLTGYNEQLVPTQGFASDPAWSPLME.

The first 28 residues, 1-28 (MEMLRRNFFRLLMVLVAGCGLIASPAKA), serve as a signal peptide directing secretion.

It belongs to the TolB family. In terms of assembly, the Tol-Pal system is composed of five core proteins: the inner membrane proteins TolA, TolQ and TolR, the periplasmic protein TolB and the outer membrane protein Pal. They form a network linking the inner and outer membranes and the peptidoglycan layer.

Its subcellular location is the periplasm. In terms of biological role, part of the Tol-Pal system, which plays a role in outer membrane invagination during cell division and is important for maintaining outer membrane integrity. This is Tol-Pal system protein TolB from Sinorhizobium medicae (strain WSM419) (Ensifer medicae).